The following is a 377-amino-acid chain: Succinyl-diaminopimelate desuccinylase (377 aa).

His-67 is a Zn(2+) binding site. Asp-69 is an active-site residue. Asp-100 is a binding site for Zn(2+). Glu-134 (proton acceptor) is an active-site residue. Zn(2+) is bound by residues Glu-135, Glu-163, and His-349.

It belongs to the peptidase M20A family. DapE subfamily. As to quaternary structure, homodimer. The cofactor is Zn(2+). It depends on Co(2+) as a cofactor.

It carries out the reaction N-succinyl-(2S,6S)-2,6-diaminopimelate + H2O = (2S,6S)-2,6-diaminopimelate + succinate. Its pathway is amino-acid biosynthesis; L-lysine biosynthesis via DAP pathway; LL-2,6-diaminopimelate from (S)-tetrahydrodipicolinate (succinylase route): step 3/3. Functionally, catalyzes the hydrolysis of N-succinyl-L,L-diaminopimelic acid (SDAP), forming succinate and LL-2,6-diaminopimelate (DAP), an intermediate involved in the bacterial biosynthesis of lysine and meso-diaminopimelic acid, an essential component of bacterial cell walls. This is Succinyl-diaminopimelate desuccinylase from Dechloromonas aromatica (strain RCB).